The sequence spans 427 residues: 3-phosphoshikimate 1-carboxyvinyltransferase (427 aa).

Positions 20, 21, and 25 each coordinate 3-phosphoshikimate. Lys-20 is a binding site for phosphoenolpyruvate. Gly-92 and Arg-120 together coordinate phosphoenolpyruvate. Positions 166, 168, 312, and 339 each coordinate 3-phosphoshikimate. Residue Gln-168 coordinates phosphoenolpyruvate. The Proton acceptor role is filled by Asp-312. Residues Arg-343 and Arg-385 each contribute to the phosphoenolpyruvate site.

It belongs to the EPSP synthase family. In terms of assembly, monomer.

It localises to the cytoplasm. The enzyme catalyses 3-phosphoshikimate + phosphoenolpyruvate = 5-O-(1-carboxyvinyl)-3-phosphoshikimate + phosphate. It functions in the pathway metabolic intermediate biosynthesis; chorismate biosynthesis; chorismate from D-erythrose 4-phosphate and phosphoenolpyruvate: step 6/7. Catalyzes the transfer of the enolpyruvyl moiety of phosphoenolpyruvate (PEP) to the 5-hydroxyl of shikimate-3-phosphate (S3P) to produce enolpyruvyl shikimate-3-phosphate and inorganic phosphate. This Streptococcus pneumoniae serotype 19F (strain G54) protein is 3-phosphoshikimate 1-carboxyvinyltransferase.